The sequence spans 429 residues: Adenylosuccinate synthetase (429 aa).

GTP contacts are provided by residues 12–18 (GDEGKGK) and 40–42 (GHT). Asp-13 (proton acceptor) is an active-site residue. Residues Asp-13 and Gly-40 each coordinate Mg(2+). IMP is bound by residues 13-16 (DEGK), 38-41 (NAGH), Thr-129, Arg-143, Gln-223, Thr-238, and Arg-302. Catalysis depends on His-41, which acts as the Proton donor. Residue 298 to 304 (VVTGRKR) participates in substrate binding. GTP-binding positions include Arg-304, 330–332 (KLD), and 412–414 (STS).

Belongs to the adenylosuccinate synthetase family. As to quaternary structure, homodimer. It depends on Mg(2+) as a cofactor.

It is found in the cytoplasm. It carries out the reaction IMP + L-aspartate + GTP = N(6)-(1,2-dicarboxyethyl)-AMP + GDP + phosphate + 2 H(+). The protein operates within purine metabolism; AMP biosynthesis via de novo pathway; AMP from IMP: step 1/2. Plays an important role in the de novo pathway of purine nucleotide biosynthesis. Catalyzes the first committed step in the biosynthesis of AMP from IMP. This Brucella anthropi (strain ATCC 49188 / DSM 6882 / CCUG 24695 / JCM 21032 / LMG 3331 / NBRC 15819 / NCTC 12168 / Alc 37) (Ochrobactrum anthropi) protein is Adenylosuccinate synthetase.